We begin with the raw amino-acid sequence, 506 residues long: Cytochrome P450 71B8 (506 aa).

The chain crosses the membrane as a helical span at residues 5–25 (ILLCFFFLFPLLLTLFKKLLP). Heme is bound at residue C443.

Belongs to the cytochrome P450 family. It depends on heme as a cofactor.

It localises to the membrane. The sequence is that of Cytochrome P450 71B8 (CYP71B8) from Arabidopsis thaliana (Mouse-ear cress).